We begin with the raw amino-acid sequence, 760 residues long: Golgin subfamily A member 5 (760 aa).

Residues M1–R727 lie on the Cytoplasmic side of the membrane. A compositionally biased stretch (polar residues) spans V95 to F111. Disordered regions lie at residues V95 to P114, D126 to D216, and T432 to K456. Positions Q135–V146 are enriched in basic and acidic residues. A compositionally biased stretch (polar residues) spans K148 to L166. Over residues P174–S201 the composition is skewed to low complexity. Residues Q249–H668 adopt a coiled-coil conformation. Positions L441–S450 are enriched in polar residues. Residues V728–Y748 form a helical; Anchor for type IV membrane protein membrane-spanning segment. Over T749 to R760 the chain is Extracellular.

Its subcellular location is the golgi apparatus membrane. Involved in maintaining Golgi structure. Stimulates the formation of Golgi stacks and ribbons. Involved in intra-Golgi retrograde transport. This is Golgin subfamily A member 5 (golga5) from Danio rerio (Zebrafish).